The sequence spans 1022 residues: Probable beta-galactosidase B (1022 aa).

Residues M1 to A20 form the signal peptide. N23 carries an N-linked (GlcNAc...) asparagine glycan. Residue Y90 participates in substrate binding. N100 carries N-linked (GlcNAc...) asparagine glycosylation. Substrate is bound by residues N135, A136, E137, and N195. E196 functions as the Proton donor in the catalytic mechanism. An N-linked (GlcNAc...) asparagine glycan is attached at N211. Position 265 (Y265) interacts with substrate. C271 and C324 are joined by a disulfide. The active-site Nucleophile is the E308. Y373 provides a ligand contact to substrate. N411, N456, N541, N554, N626, N777, N790, N832, N880, and N881 each carry an N-linked (GlcNAc...) asparagine glycan.

Belongs to the glycosyl hydrolase 35 family.

It is found in the secreted. It catalyses the reaction Hydrolysis of terminal non-reducing beta-D-galactose residues in beta-D-galactosides.. Functionally, cleaves beta-linked terminal galactosyl residues from gangliosides, glycoproteins, and glycosaminoglycans. The protein is Probable beta-galactosidase B (lacB) of Aspergillus terreus (strain NIH 2624 / FGSC A1156).